Here is a 296-residue protein sequence, read N- to C-terminus: Phosphoribosylaminoimidazole-succinocarboxamide synthase (296 aa).

It belongs to the SAICAR synthetase family.

It carries out the reaction 5-amino-1-(5-phospho-D-ribosyl)imidazole-4-carboxylate + L-aspartate + ATP = (2S)-2-[5-amino-1-(5-phospho-beta-D-ribosyl)imidazole-4-carboxamido]succinate + ADP + phosphate + 2 H(+). Its pathway is purine metabolism; IMP biosynthesis via de novo pathway; 5-amino-1-(5-phospho-D-ribosyl)imidazole-4-carboxamide from 5-amino-1-(5-phospho-D-ribosyl)imidazole-4-carboxylate: step 1/2. This is Phosphoribosylaminoimidazole-succinocarboxamide synthase from Syntrophotalea carbinolica (strain DSM 2380 / NBRC 103641 / GraBd1) (Pelobacter carbinolicus).